A 198-amino-acid polypeptide reads, in one-letter code: Recombination protein RecR (198 aa).

The segment at 57–72 adopts a C4-type zinc-finger fold; sequence CSVCGHITEEDPCYIC. The region spanning 80 to 175 is the Toprim domain; the sequence is SVICVVEDDK…KVTRLAQGLS (96 aa).

The protein belongs to the RecR family.

In terms of biological role, may play a role in DNA repair. It seems to be involved in an RecBC-independent recombinational process of DNA repair. It may act with RecF and RecO. The polypeptide is Recombination protein RecR (Staphylococcus carnosus (strain TM300)).